The sequence spans 440 residues: Doublesex- and mab-3-related transcription factor A2 (440 aa).

The DM DNA-binding region spans 59 to 106; it reads CARCRNHGVVSALKGHKRYCRWKDCMCAKCTLIAERQRVMAAQVALRR. The tract at residues 167–261 is disordered; it reads PKTPLPGTVT…SPSSAASRQM (95 aa). A compositionally biased stretch (basic and acidic residues) spans 199–213; it reads DMRHGSGSENGDRES. Residues 229 to 241 show a composition bias toward low complexity; sequence TPGSISPIGSDSG. The segment covering 251-261 has biased composition (polar residues); sequence PSPSSAASRQM. Residues 261-296 enclose the DMA domain; it reads MNAIDILTRVFPNHKRSVLELVLQGCGKNVVQAIEQ.

Belongs to the DMRT family. Restrictively expressed in brain and developing germ cells, especially in spermatogonia, spermatocytes, spermatids, and sperm cells, and in developing oocytes, including early perinucleolus stage oocyte, late yolk vesicle stage oocyte, and oil drop stage oocyte.

The protein resides in the nucleus. In terms of biological role, may be involved in sexual development. The protein is Doublesex- and mab-3-related transcription factor A2 (dmrta2) of Danio rerio (Zebrafish).